Here is a 31-residue protein sequence, read N- to C-terminus: Glucagon-5 (31 aa).

Belongs to the glucagon family.

The protein resides in the secreted. Glucagon plays a key role in glucose metabolism and homeostasis. Regulates blood glucose by increasing gluconeogenesis and decreasing glycolysis. The protein is Glucagon-5 of Huso dauricus (Kaluga sturgeon).